Consider the following 113-residue polypeptide: UPF0122 protein Lreu_1156 (113 aa).

This sequence belongs to the UPF0122 family.

Functionally, might take part in the signal recognition particle (SRP) pathway. This is inferred from the conservation of its genetic proximity to ftsY/ffh. May be a regulatory protein. The chain is UPF0122 protein Lreu_1156 from Limosilactobacillus reuteri (strain DSM 20016) (Lactobacillus reuteri).